The chain runs to 244 residues: tRNA (guanine-N(7)-)-methyltransferase (244 aa).

The segment at 1 to 24 is disordered; it reads MTDSHVPHPESPAVEEGEERPHRR. 4 residues coordinate S-adenosyl-L-methionine: Glu74, Glu99, Asp126, and Asp149. The active site involves Asp149. Substrate contacts are provided by residues Lys153, Asp185, and 222–225; that span reads TKFE.

It belongs to the class I-like SAM-binding methyltransferase superfamily. TrmB family.

The catalysed reaction is guanosine(46) in tRNA + S-adenosyl-L-methionine = N(7)-methylguanosine(46) in tRNA + S-adenosyl-L-homocysteine. It functions in the pathway tRNA modification; N(7)-methylguanine-tRNA biosynthesis. Its function is as follows. Catalyzes the formation of N(7)-methylguanine at position 46 (m7G46) in tRNA. This chain is tRNA (guanine-N(7)-)-methyltransferase, found in Pseudomonas savastanoi pv. phaseolicola (strain 1448A / Race 6) (Pseudomonas syringae pv. phaseolicola (strain 1448A / Race 6)).